We begin with the raw amino-acid sequence, 130 residues long: MNEREFKRLLKVRARLKRKKPRFLRQEWWRYPKFKNDPKWRRPKGIDSKMRLKLKGKPRSPSIGWSSPRLVRGLHPSGYEEVLIHNVKELERLDPRRQAARIAHTVGKKKRIEILKRAEELGIKVLNPRL.

It belongs to the eukaryotic ribosomal protein eL32 family.

This chain is Large ribosomal subunit protein eL32 (rpl32e), found in Pyrococcus horikoshii (strain ATCC 700860 / DSM 12428 / JCM 9974 / NBRC 100139 / OT-3).